We begin with the raw amino-acid sequence, 28 residues long: Short cationic peptide-1a (28 aa).

Glu-28 carries the glutamic acid 1-amide modification.

As to expression, expressed by the venom gland.

Its subcellular location is the secreted. This Cupiennius salei (American wandering spider) protein is Short cationic peptide-1a.